A 95-amino-acid polypeptide reads, in one-letter code: Aspartyl/glutamyl-tRNA(Asn/Gln) amidotransferase subunit C (95 aa).

It belongs to the GatC family. As to quaternary structure, heterotrimer of A, B and C subunits.

The enzyme catalyses L-glutamyl-tRNA(Gln) + L-glutamine + ATP + H2O = L-glutaminyl-tRNA(Gln) + L-glutamate + ADP + phosphate + H(+). The catalysed reaction is L-aspartyl-tRNA(Asn) + L-glutamine + ATP + H2O = L-asparaginyl-tRNA(Asn) + L-glutamate + ADP + phosphate + 2 H(+). In terms of biological role, allows the formation of correctly charged Asn-tRNA(Asn) or Gln-tRNA(Gln) through the transamidation of misacylated Asp-tRNA(Asn) or Glu-tRNA(Gln) in organisms which lack either or both of asparaginyl-tRNA or glutaminyl-tRNA synthetases. The reaction takes place in the presence of glutamine and ATP through an activated phospho-Asp-tRNA(Asn) or phospho-Glu-tRNA(Gln). This Halorhodospira halophila (strain DSM 244 / SL1) (Ectothiorhodospira halophila (strain DSM 244 / SL1)) protein is Aspartyl/glutamyl-tRNA(Asn/Gln) amidotransferase subunit C.